We begin with the raw amino-acid sequence, 396 residues long: Acetate kinase (396 aa).

Asn7 contacts Mg(2+). ATP is bound at residue Lys14. Residue Arg91 participates in substrate binding. Asp148 acts as the Proton donor/acceptor in catalysis. ATP contacts are provided by residues His208–Gly212, Asp283–Arg285, and Gly331–Asn335. Residue Glu384 coordinates Mg(2+).

It belongs to the acetokinase family. In terms of assembly, homodimer. The cofactor is Mg(2+). Requires Mn(2+) as cofactor.

It is found in the cytoplasm. It catalyses the reaction acetate + ATP = acetyl phosphate + ADP. Its pathway is metabolic intermediate biosynthesis; acetyl-CoA biosynthesis; acetyl-CoA from acetate: step 1/2. Catalyzes the formation of acetyl phosphate from acetate and ATP. Can also catalyze the reverse reaction. The chain is Acetate kinase from Desulforamulus reducens (strain ATCC BAA-1160 / DSM 100696 / MI-1) (Desulfotomaculum reducens).